A 149-amino-acid chain; its full sequence is Arginine regulator (149 aa).

It belongs to the ArgR family.

The protein localises to the cytoplasm. The protein operates within amino-acid degradation; L-arginine degradation via ADI pathway. Its function is as follows. Regulates the transcription of the arc operon, involved in arginine catabolism. This is Arginine regulator (argR1) from Bacillus cereus (strain ATCC 10987 / NRS 248).